A 525-amino-acid chain; its full sequence is G patch domain-containing protein 3 (525 aa).

2 disordered regions span residues 54-85 and 246-317; these read ERGP…PASD and EQEE…QERT. A compositionally biased stretch (acidic residues) spans 274 to 299; it reads DEPEDEGQQQEEEEESGSEEDDDRGE. Over residues 300–317 the composition is skewed to basic and acidic residues; sequence EWERHEALHEDVTGQERT. The G-patch domain occupies 411–459; it reads TKGIGRKVMERQGWAEGQGLGSRCSGVPEALDGDGQHPRCKRGLGYHGE.

Interacts with mitochondrial MAVS; the interaction is markedly increased upon viral infection.

The protein localises to the nucleus. It localises to the cytoplasm. Involved in transcriptional regulation. It is able to activate transcription from CXCR4 promoter and therefore it might control neural crest cell migration involved in ocular and craniofacial development. Is a negative regulator of immune antiviral response, acting via down-regulation of RIG-I-like receptors signaling and inhibition of type I interferon production. The control mechanism involves interaction with mitochondrial MAVS and inhibition of MAVS assembly with downstream proteins implicated in antiviral response, such as TBK1 and TRAF6. This is G patch domain-containing protein 3 (Gpatch3) from Mus musculus (Mouse).